A 1226-amino-acid polypeptide reads, in one-letter code: MKLKRLVIQGFKSFKDRTTIHFDDGITGIVGPNGCGKSNIVDALFWVMGEQSAKHLRGKSMKDLIFAGSSKYNPGAYAEATLVLGNDDGKHIHIGNKVSSPSEIQLTRKLYRNGETEYRINNYPARLKDIQEVFMDTGAGAKSYSIIAQGEINRLVQAKPEERRTMIEEVAGITKFKVRKKESLKKIEQTEQNLNRLQDLQSEIEKNLKALQKQAEKAERARSLKEKIKRNDIIVHAHKVYDLLKDLRDGKTLLNEKTLELEGWGTRKNSLEISLEEERFKKEEQTEKLEILQKERNEISTQLATAEERFSNLCKTLTDKENLIETRQKEMTELEEELVEREEKIKALEDSLVELQTRNEETVNFEEVEEKIELLKERLELKTDQVDTLKEEIELKKSELNTLSQAAFQNTSKLEEYAANLQDITEEIEALEKQYSGVSTQIADERDAVHTAQELSEKLTEVESELKSEIEELISANKELDAKLKEKSKSLITKESKLSSLQEIAAAMDGVREGAVEFLETVDSDKYQLLGNLIQCEEDHAKAVQNLLSDFMDTLVSTDEDVSAVIEWCKTNNDKALEFLAPNKNGDITSEETLERLRVATGGDITPVHELLNLPEEYKSKLIPFFDGYFIASKFDQEVFKSISDSIRFKAISSTDGKLLVKNPGNGKILTMSGSSEGQGVVERNNQIQELEKEIEVLRVEVAELETNSGEKSLVLEQKRDSLEEQRNLLSEARADHAAKKSALESKLSGMESGNTRLEILKKRKQEISKSRLDMLESEDSLSKNKSSLDEELEELSTRFEEENAELADLKSTYETEREAYMEKQVEINTFKERVSGIQSQIEDINSQMDKQTARIASNKELIEKYNEEIETTNDQIDTLESSNQEMASELSERDDVLGIMKDDLTQLLLAMQEREDEVKELSKKIAKNEKDITEYELKINQWQNDEVEVVKNIFEKYQIDLREAIGGFLEYDQDDFDDLIDTRQMHFMETENGLVTIEKQSYEFHRRYGQDLKECSNKLKNYKNEYNRLGEINWQAIEDYDRQKLRFDFLRVQEVELKQSLEDLETAINHIDEKSKERFKIAFEEVDVRFRKVFPIIFGGGEAMLKVTGDINDSECGVDIIAKPPGKKMQNINLMSGGEKAMTAVSLIFSIFLVKPSPFCLLDEVDAPLDDANVGRFNELLREMSSDSQFILITHNKKTMELNDTLYGVTMQEPGVSKAVSVQLH.

32-39 contributes to the ATP binding site; the sequence is PNGCGKSN. 2 coiled-coil regions span residues 173-231 and 269-491; these read ITKF…IKRN and NSLE…SKSL. The SMC hinge domain occupies 527 to 635; the sequence is YQLLGNLIQC…FDGYFIASKF (109 aa). Coiled coils occupy residues 679–741, 775–965, and 1006–1078; these read QGVV…AAKK, MLES…LREA, and HRRY…KSKE.

It belongs to the SMC family. In terms of assembly, homodimer.

Its subcellular location is the cytoplasm. Required for chromosome condensation and partitioning. The polypeptide is Chromosome partition protein Smc (Halobacteriovorax marinus (strain ATCC BAA-682 / DSM 15412 / SJ) (Bacteriovorax marinus)).